Consider the following 359-residue polypeptide: MRNFISIKELSKEEVIEVLDVAKELDNADSKERRKIMDGMIMTSIFFEPSTRTRLSFTSAAYRLGCKELGFDNPEQSSVKKGESLRDTIIMVSAYSDIIVMRHSIDGAAKFAEEVTNCPIINAGDGANEHPSQTLLDLYTLREELGTIENQKVAFVGDTRYGRTVHSLVDGLMMFNGQFYFISPDVIQIPDYILKELDNANIKYKKLSNYEEVLKEIDCLYMTRVQRERFDDINEYEEVKHAFRISKDNIVGKCKDDMIILHPLPRVDEINIDLDDTKYAKYFIQARNGVPTRMAMMALATDAIKSKVKRKEMNYEVVENKEVVCPNNKCVTHFEETKNRVVKKGYGDFCYYCNREIGK.

Arg52 and Thr53 together coordinate carbamoyl phosphate. L-aspartate is bound at residue Lys81. Carbamoyl phosphate contacts are provided by Arg102, His130, and Gln133. Residues Arg163 and Arg224 each coordinate L-aspartate. Leu264 and Pro265 together coordinate carbamoyl phosphate.

Belongs to the aspartate/ornithine carbamoyltransferase superfamily. ATCase family. As to quaternary structure, heterododecamer (2C3:3R2) of six catalytic PyrB chains organized as two trimers (C3), and six regulatory PyrI chains organized as three dimers (R2).

The enzyme catalyses carbamoyl phosphate + L-aspartate = N-carbamoyl-L-aspartate + phosphate + H(+). Its pathway is pyrimidine metabolism; UMP biosynthesis via de novo pathway; (S)-dihydroorotate from bicarbonate: step 2/3. Catalyzes the condensation of carbamoyl phosphate and aspartate to form carbamoyl aspartate and inorganic phosphate, the committed step in the de novo pyrimidine nucleotide biosynthesis pathway. The sequence is that of Aspartate carbamoyltransferase catalytic subunit from Brachyspira hyodysenteriae (strain ATCC 49526 / WA1).